Reading from the N-terminus, the 169-residue chain is Protein kinase-interacting protein PIKP1 (169 aa).

As to quaternary structure, interacts with protein kinase PK1.

Its function is as follows. Plays a role in the stimulation of the viral kinase PK1 function in very late transcription and in expression of genes required for budded virus production. This Lepidoptera (butterflies and moths) protein is Protein kinase-interacting protein PIKP1 (AC24).